A 131-amino-acid chain; its full sequence is Fluoride-specific ion channel FluC (131 aa).

Helical transmembrane passes span Leu-4–Val-24, Gly-30–Phe-50, Leu-68–Thr-88, and Ile-104–Ala-124. Residues Gly-76 and Thr-79 each coordinate Na(+).

Belongs to the fluoride channel Fluc/FEX (TC 1.A.43) family.

It is found in the cell inner membrane. The enzyme catalyses fluoride(in) = fluoride(out). With respect to regulation, na(+) is not transported, but it plays an essential structural role and its presence is essential for fluoride channel function. In terms of biological role, fluoride-specific ion channel. Important for reducing fluoride concentration in the cell, thus reducing its toxicity. The chain is Fluoride-specific ion channel FluC from Methylocella silvestris (strain DSM 15510 / CIP 108128 / LMG 27833 / NCIMB 13906 / BL2).